The chain runs to 92 residues: Bombyxin A-4 (92 aa).

Positions 1–19 are cleaved as a signal peptide; the sequence is MKILLAIALMLSTVMWVST. A Pyrrolidone carboxylic acid modification is found at glutamine 20. 3 cysteine pairs are disulfide-bonded: cysteine 29-cysteine 79, cysteine 41-cysteine 92, and cysteine 78-cysteine 83. Residues 50-70 constitute a propeptide, c peptide like; it reads SGAQFASYGSAWLMPYSEGRG.

This sequence belongs to the insulin family. In terms of assembly, heterodimer of a B chain and an A chain linked by two disulfide bonds.

It is found in the secreted. Brain peptide responsible for activation of prothoracic glands to produce ecdysone in insects. In Bombyx mori (Silk moth), this protein is Bombyxin A-4 (BBXA4).